The primary structure comprises 114 residues: Immunomodulatory protein FIP-Fve (114 aa).

Ser1 is subject to N-acetylserine.

It belongs to the fungal immunomodulatory protein (FIP) family. In terms of assembly, homodimer.

In terms of biological role, lectin with specificity for complex cell-surface carbohydrates. Possesses immunomodulatory activity, stimulates lymphocyte mitogenesis, suppresses systemic anaphylaxis reactions and edema, enhances transcription of IL-2, IFN-gamma and TNF-alpha and hemagglutinates red blood cells. The polypeptide is Immunomodulatory protein FIP-Fve (Flammulina velutipes (Agaricus velutipes)).